The chain runs to 123 residues: SOSS complex subunit C homolog (123 aa).

This sequence belongs to the SOSS-C family.

This chain is SOSS complex subunit C homolog, found in Drosophila ananassae (Fruit fly).